The chain runs to 89 residues: Large ribosomal subunit protein eL43 (89 aa).

Zn(2+)-binding residues include Cys-38, Cys-41, Cys-56, and Cys-59. The segment at 38–59 adopts a C4-type zinc-finger fold; it reads CPSCDRPGVKRESRGIWKCRKC.

Belongs to the eukaryotic ribosomal protein eL43 family. Putative zinc-binding subfamily. In terms of assembly, part of the 50S ribosomal subunit. The cofactor is Zn(2+).

Its function is as follows. Binds to the 23S rRNA. In Methanothermobacter thermautotrophicus (strain ATCC 29096 / DSM 1053 / JCM 10044 / NBRC 100330 / Delta H) (Methanobacterium thermoautotrophicum), this protein is Large ribosomal subunit protein eL43.